A 275-amino-acid polypeptide reads, in one-letter code: Light-independent protochlorophyllide reductase iron-sulfur ATP-binding protein (275 aa).

ATP contacts are provided by residues glycine 12–threonine 17 and lysine 41. Serine 16 contacts Mg(2+). [4Fe-4S] cluster contacts are provided by cysteine 97 and cysteine 131. Asparagine 182 to arginine 183 serves as a coordination point for ATP.

This sequence belongs to the NifH/BchL/ChlL family. As to quaternary structure, homodimer. Protochlorophyllide reductase is composed of three subunits; BchL, BchN and BchB. Requires [4Fe-4S] cluster as cofactor.

The catalysed reaction is chlorophyllide a + oxidized 2[4Fe-4S]-[ferredoxin] + 2 ADP + 2 phosphate = protochlorophyllide a + reduced 2[4Fe-4S]-[ferredoxin] + 2 ATP + 2 H2O. It participates in porphyrin-containing compound metabolism; bacteriochlorophyll biosynthesis (light-independent). In terms of biological role, component of the dark-operative protochlorophyllide reductase (DPOR) that uses Mg-ATP and reduced ferredoxin to reduce ring D of protochlorophyllide (Pchlide) to form chlorophyllide a (Chlide). This reaction is light-independent. The L component serves as a unique electron donor to the NB-component of the complex, and binds Mg-ATP. This chain is Light-independent protochlorophyllide reductase iron-sulfur ATP-binding protein, found in Prosthecochloris aestuarii (strain DSM 271 / SK 413).